A 174-amino-acid polypeptide reads, in one-letter code: Shikimate kinase (174 aa).

Gly10 to Ala15 is a binding site for ATP. Mg(2+) is bound at residue Thr14. Residues Asp32, Arg56, and Gly78 each contribute to the substrate site. ATP is bound at residue Arg118. Substrate is bound at residue Arg137. Arg154 contributes to the ATP binding site.

The protein belongs to the shikimate kinase family. As to quaternary structure, monomer. Requires Mg(2+) as cofactor.

It is found in the cytoplasm. It carries out the reaction shikimate + ATP = 3-phosphoshikimate + ADP + H(+). The protein operates within metabolic intermediate biosynthesis; chorismate biosynthesis; chorismate from D-erythrose 4-phosphate and phosphoenolpyruvate: step 5/7. Catalyzes the specific phosphorylation of the 3-hydroxyl group of shikimic acid using ATP as a cosubstrate. The polypeptide is Shikimate kinase (Symbiobacterium thermophilum (strain DSM 24528 / JCM 14929 / IAM 14863 / T)).